The sequence spans 719 residues: Phosphoribosylformylglycinamidine synthase subunit PurL (719 aa).

His-47 is a catalytic residue. The ATP site is built by Tyr-50 and Lys-89. Glu-91 is a binding site for Mg(2+). Substrate is bound by residues 92 to 95 and Arg-114; that span reads SHNH. The active-site Proton acceptor is the His-93. Residue Asp-115 participates in Mg(2+) binding. Gln-238 is a substrate binding site. Asp-266 contributes to the Mg(2+) binding site. A substrate-binding site is contributed by 310–312; it reads ESQ. Residues Asp-488 and Gly-525 each coordinate ATP. Position 526 (Asn-526) interacts with Mg(2+). Substrate is bound at residue Ser-528.

This sequence belongs to the FGAMS family. In terms of assembly, monomer. Part of the FGAM synthase complex composed of 1 PurL, 1 PurQ and 2 PurS subunits.

It is found in the cytoplasm. It catalyses the reaction N(2)-formyl-N(1)-(5-phospho-beta-D-ribosyl)glycinamide + L-glutamine + ATP + H2O = 2-formamido-N(1)-(5-O-phospho-beta-D-ribosyl)acetamidine + L-glutamate + ADP + phosphate + H(+). Its pathway is purine metabolism; IMP biosynthesis via de novo pathway; 5-amino-1-(5-phospho-D-ribosyl)imidazole from N(2)-formyl-N(1)-(5-phospho-D-ribosyl)glycinamide: step 1/2. In terms of biological role, part of the phosphoribosylformylglycinamidine synthase complex involved in the purines biosynthetic pathway. Catalyzes the ATP-dependent conversion of formylglycinamide ribonucleotide (FGAR) and glutamine to yield formylglycinamidine ribonucleotide (FGAM) and glutamate. The FGAM synthase complex is composed of three subunits. PurQ produces an ammonia molecule by converting glutamine to glutamate. PurL transfers the ammonia molecule to FGAR to form FGAM in an ATP-dependent manner. PurS interacts with PurQ and PurL and is thought to assist in the transfer of the ammonia molecule from PurQ to PurL. This Roseobacter denitrificans (strain ATCC 33942 / OCh 114) (Erythrobacter sp. (strain OCh 114)) protein is Phosphoribosylformylglycinamidine synthase subunit PurL.